A 420-amino-acid polypeptide reads, in one-letter code: Exodeoxyribonuclease 7 large subunit (420 aa).

Belongs to the XseA family. In terms of assembly, heterooligomer composed of large and small subunits.

The protein localises to the cytoplasm. It catalyses the reaction Exonucleolytic cleavage in either 5'- to 3'- or 3'- to 5'-direction to yield nucleoside 5'-phosphates.. Bidirectionally degrades single-stranded DNA into large acid-insoluble oligonucleotides, which are then degraded further into small acid-soluble oligonucleotides. The sequence is that of Exodeoxyribonuclease 7 large subunit from Helicobacter pylori (strain G27).